A 179-amino-acid chain; its full sequence is Protein GrpE (179 aa).

Over residues 1-10 (MSKKEEKQEE) the composition is skewed to basic and acidic residues. Residues 1–23 (MSKKEEKQEELQEEMEAVDAAGV) are disordered.

Belongs to the GrpE family. Homodimer.

It localises to the cytoplasm. Its function is as follows. Participates actively in the response to hyperosmotic and heat shock by preventing the aggregation of stress-denatured proteins, in association with DnaK and GrpE. It is the nucleotide exchange factor for DnaK and may function as a thermosensor. Unfolded proteins bind initially to DnaJ; upon interaction with the DnaJ-bound protein, DnaK hydrolyzes its bound ATP, resulting in the formation of a stable complex. GrpE releases ADP from DnaK; ATP binding to DnaK triggers the release of the substrate protein, thus completing the reaction cycle. Several rounds of ATP-dependent interactions between DnaJ, DnaK and GrpE are required for fully efficient folding. The chain is Protein GrpE from Enterococcus faecalis (strain ATCC 700802 / V583).